The chain runs to 284 residues: BTB/POZ domain-containing protein 2 (284 aa).

One can recognise a BTB domain in the interval S37 to A108.

As to quaternary structure, interacts with cul3.

Its subcellular location is the cytoplasm. The protein localises to the nucleus. It functions in the pathway protein modification; protein ubiquitination. Its function is as follows. Probable substrate-specific adapter of an E3 ubiquitin-protein ligase complex which mediates the ubiquitination and subsequent proteasomal degradation of target proteins. In Schizosaccharomyces pombe (strain 972 / ATCC 24843) (Fission yeast), this protein is BTB/POZ domain-containing protein 2 (btb2).